Consider the following 72-residue polypeptide: NAD(P)H-quinone oxidoreductase subunit O (72 aa).

Belongs to the complex I NdhO subunit family. As to quaternary structure, NDH-1 can be composed of about 15 different subunits; different subcomplexes with different compositions have been identified which probably have different functions.

The protein resides in the cellular thylakoid membrane. It carries out the reaction a plastoquinone + NADH + (n+1) H(+)(in) = a plastoquinol + NAD(+) + n H(+)(out). The enzyme catalyses a plastoquinone + NADPH + (n+1) H(+)(in) = a plastoquinol + NADP(+) + n H(+)(out). NDH-1 shuttles electrons from an unknown electron donor, via FMN and iron-sulfur (Fe-S) centers, to quinones in the respiratory and/or the photosynthetic chain. The immediate electron acceptor for the enzyme in this species is believed to be plastoquinone. Couples the redox reaction to proton translocation, and thus conserves the redox energy in a proton gradient. Cyanobacterial NDH-1 also plays a role in inorganic carbon-concentration. The polypeptide is NAD(P)H-quinone oxidoreductase subunit O (Rippkaea orientalis (strain PCC 8801 / RF-1) (Cyanothece sp. (strain PCC 8801))).